Reading from the N-terminus, the 285-residue chain is Acetylglutamate kinase (285 aa).

Residues 64–65 (GG), Arg86, and Asn179 each bind substrate.

This sequence belongs to the acetylglutamate kinase family. ArgB subfamily.

It is found in the plastid. The protein resides in the chloroplast. It catalyses the reaction N-acetyl-L-glutamate + ATP = N-acetyl-L-glutamyl 5-phosphate + ADP. Its pathway is amino-acid biosynthesis; L-arginine biosynthesis; N(2)-acetyl-L-ornithine from L-glutamate: step 2/4. Functionally, catalyzes the ATP-dependent phosphorylation of N-acetyl-L-glutamate. The sequence is that of Acetylglutamate kinase from Pyropia yezoensis (Susabi-nori).